The chain runs to 331 residues: Cytosolic Fe-S cluster assembly factor CFD1 (331 aa).

25–32 contributes to the ATP binding site; sequence GKGGVGKS. [4Fe-4S] cluster is bound by residues Cys-211 and Cys-214.

It belongs to the Mrp/NBP35 ATP-binding proteins family. NUBP2/CFD1 subfamily. Heterotetramer of 2 NBP35 and 2 CFD1 chains. The cofactor is [4Fe-4S] cluster.

Its subcellular location is the cytoplasm. Component of the cytosolic iron-sulfur (Fe/S) protein assembly (CIA) machinery. Required for maturation of extramitochondrial Fe-S proteins. The NBP35-CFD1 heterotetramer forms a Fe-S scaffold complex, mediating the de novo assembly of an Fe-S cluster and its transfer to target apoproteins. The chain is Cytosolic Fe-S cluster assembly factor CFD1 from Cryptococcus neoformans var. neoformans serotype D (strain B-3501A) (Filobasidiella neoformans).